The following is a 463-amino-acid chain: Putative sodium-coupled neutral amino acid transporter 11 (463 aa).

The interval 1-27 is disordered; that stretch reads MGYPGQRPVIPPQSHRDDRETLVSEHK. Basic and acidic residues predominate over residues 14–25; that stretch reads SHRDDRETLVSE. 11 helical membrane-spanning segments follow: residues 38 to 58, 65 to 85, 105 to 125, 150 to 170, 178 to 198, 225 to 245, 256 to 276, 298 to 320, 336 to 356, 358 to 378, and 397 to 417; these read AVFN…PYSM, LGIL…ILLI, GFPG…IAMI, LLIG…LPLS, LGKI…IVVA, VGVM…YGSL, IIHV…TCGY, VTFG…CFVT, VCHI…SLLI, CLGI…IFII, and IMSC…FVMA. Asparagine 437, asparagine 442, and asparagine 458 each carry an N-linked (GlcNAc...) asparagine glycan.

Belongs to the amino acid/polyamine transporter 2 family.

It localises to the membrane. Functionally, putative sodium-dependent amino acid/proton antiporter. In Bos taurus (Bovine), this protein is Putative sodium-coupled neutral amino acid transporter 11 (SLC38A11).